A 119-amino-acid polypeptide reads, in one-letter code: uncharacterized protein (119 aa).

2 consecutive transmembrane segments (helical) span residues Phe-19–Leu-39 and Phe-68–Leu-88.

The protein resides in the membrane. This is an uncharacterized protein from Saccharomyces cerevisiae (strain ATCC 204508 / S288c) (Baker's yeast).